We begin with the raw amino-acid sequence, 137 residues long: Large ribosomal subunit protein uL16c (137 aa).

This sequence belongs to the universal ribosomal protein uL16 family. In terms of assembly, part of the 50S ribosomal subunit.

Its subcellular location is the plastid. The protein resides in the chloroplast. This is Large ribosomal subunit protein uL16c from Rhodomonas salina (Cryptomonas salina).